The following is an 89-amino-acid chain: Small ribosomal subunit protein uS15 (89 aa).

Belongs to the universal ribosomal protein uS15 family. As to quaternary structure, part of the 30S ribosomal subunit. Forms a bridge to the 50S subunit in the 70S ribosome, contacting the 23S rRNA.

Functionally, one of the primary rRNA binding proteins, it binds directly to 16S rRNA where it helps nucleate assembly of the platform of the 30S subunit by binding and bridging several RNA helices of the 16S rRNA. Its function is as follows. Forms an intersubunit bridge (bridge B4) with the 23S rRNA of the 50S subunit in the ribosome. The protein is Small ribosomal subunit protein uS15 of Vibrio vulnificus (strain YJ016).